Here is a 301-residue protein sequence, read N- to C-terminus: Ankyrin repeat domain-containing protein 29 (301 aa).

8 ANK repeats span residues 11-41 (PLAN…DVDC), 45-74 (HGTT…DINL), 78-107 (SGTT…STEF), 111-140 (DGGT…NIHD), 144-173 (DGAT…KVNQ), 177-206 (DGTA…DRDA), 210-239 (DGTT…TLGI), and 242-271 (NGTS…DPSL).

The polypeptide is Ankyrin repeat domain-containing protein 29 (ANKRD29) (Homo sapiens (Human)).